The sequence spans 647 residues: RalBP1-associated Eps domain-containing protein 2 (647 aa).

The 102-residue stretch at 21-122 (EQQCYSELFA…RTESIKCELP (102 aa)) folds into the EH 1 domain. A disordered region spans residues 156-233 (EKNSFKRMDN…PSSEGPGAKP (78 aa)). Basic and acidic residues predominate over residues 158–170 (NSFKRMDNEDKQE). Over residues 221 to 230 (PEGPSSEGPG) the composition is skewed to low complexity. At Ser-239 the chain carries Phosphoserine. In terms of domain architecture, EH 2 spans 268–359 (QREYYVNQFR…LQPEYLQAAF (92 aa)). An EF-hand domain is found at 301-336 (LSIPELSYIWELSDADCDGALTLSEFCAAFHLIVAR). Asp-314, Asp-316, Asp-318, and Glu-325 together coordinate Ca(2+). The interval 402-478 (PTQDVTTADD…PRPQKTHSRA (77 aa)) is disordered. Position 466 is a phosphothreonine (Thr-466). Residue Ser-480 is modified to Phosphoserine. The tract at residues 492–568 (PAANSGLLPP…PENQTTESQE (77 aa)) is disordered. Pro residues predominate over residues 499-510 (LPPPPALPPRPC). The segment at 501 to 647 (PPPALPPRPC…LEQLRPVTVL (147 aa)) is interaction with RALBP1. Residues 524 to 539 (SQLNRAPSQAAESSPT) are compositionally biased toward polar residues. The interaction with ASAP1 stretch occupies residues 548–647 (PPSKPIRRKF…LEQLRPVTVL (100 aa)). Positions 599–640 (IQTAIRKNKEANAVLARLNSELQQQLKEVHQERIALENQLEQ) form a coiled coil.

In terms of assembly, interacts with EPN1. Interacts with EPS15 AND EPS15L1. Interacts with RALBP1; can form a ternary complex with activated Ral (RALA or RALB). Interacts with ASAP1; the interaction is direct and this complex can bind paxillin. Also forms a ternary complex with RALBP1 and ASAP1. Interacts with GRB2. In terms of processing, tyrosine-phosphorylated upon stimulation of cells with EGF. Phosphorylation on Tyr-residues induces its association with the EGF receptor probably indirectly through an adapter like GRB2.

It is found in the cytoplasm. In terms of biological role, involved in ligand-dependent receptor mediated endocytosis of the EGF and insulin receptors as part of the Ral signaling pathway. By controlling growth factor receptors endocytosis may regulate cell survival. Through ASAP1 may regulate cell adhesion and migration. In Mus musculus (Mouse), this protein is RalBP1-associated Eps domain-containing protein 2 (Reps2).